We begin with the raw amino-acid sequence, 356 residues long: MTAEPTVAARPQQIDALRTLIRLGSLHTPMVVRTAATLRLVDHILAGARTVKALAARTDTRPEALLRLIRHLVAIGLLEEDAPGEFVPTEVGELLADDHPAAQRAWHDLTQAVARADISFTRLPDAIRTGRPTYESIYGKPFYEDLAGRPDLRASFDSLLACDQDVAFDAPAAAYDWTNVRHVLDVGGGKGGFAAAIARRAPHVSATVLEMAGTVDTARSYLKDEGLSDRVDVVEGDFFEPLPRKADAIILSFVLLNWPDHDAVRILTRCAEALEPGGRILIHERDDLHENSFNEQFTELDLRMLVFLGGALRTREKWDGLAASAGLVVEEVRQLPSPTIPYDLSLLVLAPAATGA.

R153 lines the S-adenosyl-L-methionine pocket. Residue D163 coordinates substrate. Residues G187, E210, 237–238 (DF), and S252 contribute to the S-adenosyl-L-methionine site. Substrate-binding residues include N257 and R303.

Belongs to the class I-like SAM-binding methyltransferase superfamily. Cation-independent O-methyltransferase family. As to quaternary structure, homodimer and homotetramer in equilibrium.

It carries out the reaction carminomycin + S-adenosyl-L-methionine = daunorubicin + S-adenosyl-L-homocysteine + H(+). It functions in the pathway antibiotic biosynthesis; daunorubicin biosynthesis. The protein operates within antibiotic biosynthesis; carminomycin biosynthesis. In terms of biological role, involved in the biosynthesis of the anthracyclines carminomycin and daunorubicin (daunomycin) which are aromatic polyketide antibiotics that exhibit high cytotoxicity and are widely applied in the chemotherapy of a variety of cancers. In vivo, catalyzes the transfer of a methyl group from S-adenosyl-L-methionine to the 4-O-position of carminomycin to form daunorubicin. In vitro, it also methylates the anthracyclines rhodomycin D (10-carbomethoxy-13-deoxycarminomycin) and 13-deoxy-carminomycin at the 4-hydroxyl position. It is quite specific with respect to the length of the carbohydrate chain at the C7 position, but it can accept substrates with bulky substituent at C10 position. The polypeptide is Carminomycin 4-O-methyltransferase DnrK (dnrK) (Streptomyces peucetius).